Here is a 541-residue protein sequence, read N- to C-terminus: 2-hydroxyacylsphingosine 1-beta-galactosyltransferase (541 aa).

Residues 1-20 (MKSYTPYFMLLWSAVGIARA) form the signal peptide. Residues asparagine 78, asparagine 333, and asparagine 442 are each glycosylated (N-linked (GlcNAc...) asparagine). Residues 472 to 492 (YFLLDIAFVLLLGAVALYFIV) traverse the membrane as a helical segment.

It belongs to the UDP-glycosyltransferase family. Brain, restricted to the oligodendrocyte-containing cell layers of cerebrum and cerebellum.

It localises to the membrane. The protein resides in the endoplasmic reticulum. The enzyme catalyses an N-acylsphing-4-enine + UDP-alpha-D-galactose = a beta-D-galactosyl-(1&lt;-&gt;1')-N-acylsphing-4-enine + UDP + H(+). The catalysed reaction is N-(2-hydroxy-hexanoyl)-sphing-4-enine + UDP-alpha-D-galactose = N-(2-hydroxy-hexanoyl)-beta-D-galactosyl-sphing-4-enine + UDP + H(+). It catalyses the reaction N-(2-hydroxy-hexanoyl)-sphinganine + UDP-alpha-D-galactose = N-(2-hydroxyhexanoyl)-beta-D-galactosylsphinganine + UDP + H(+). It carries out the reaction an N-acyl-sphingoid base + UDP-alpha-D-galactose = a D-galactosylceramide + UDP + H(+). The protein operates within sphingolipid metabolism; galactosylceramide biosynthesis. In terms of biological role, catalyzes the transfer of galactose to ceramide, a key enzymatic step in the biosynthesis of galactocerebrosides, which are abundant sphingolipids of the myelin membrane of the central nervous system and peripheral nervous system. Galactosylates both hydroxy- and non-hydroxy fatty acid-containing ceramides and diglycerides. The chain is 2-hydroxyacylsphingosine 1-beta-galactosyltransferase from Rattus norvegicus (Rat).